We begin with the raw amino-acid sequence, 96 residues long: Co-chaperonin GroES (96 aa).

The protein belongs to the GroES chaperonin family. As to quaternary structure, heptamer of 7 subunits arranged in a ring. Interacts with the chaperonin GroEL.

It localises to the cytoplasm. Functionally, together with the chaperonin GroEL, plays an essential role in assisting protein folding. The GroEL-GroES system forms a nano-cage that allows encapsulation of the non-native substrate proteins and provides a physical environment optimized to promote and accelerate protein folding. GroES binds to the apical surface of the GroEL ring, thereby capping the opening of the GroEL channel. The polypeptide is Co-chaperonin GroES (Chromohalobacter salexigens (strain ATCC BAA-138 / DSM 3043 / CIP 106854 / NCIMB 13768 / 1H11)).